The chain runs to 29 residues: Cyclotide mden-C (29 aa).

Positions 1–29 form a cross-link, cyclopeptide (Gly-Asn); that stretch reads GKPICGETCFKGKCYTPGCTCSYPVCKKN. Cystine bridges form between cysteine 5-cysteine 19, cysteine 9-cysteine 21, and cysteine 14-cysteine 26.

Belongs to the cyclotide family. Post-translationally, this is a cyclic peptide.

Functionally, probably participates in a plant defense mechanism. The polypeptide is Cyclotide mden-C (Melicytus dentatus (Tree violet)).